The chain runs to 1143 residues: Disease resistance protein Pikm1-TS (1143 aa).

The segment at 1–190 is structured coiled coil (CC) domain; that stretch reads MEAAAMAVTA…PLRIMGGEMQ (190 aa). Positions 189–258 constitute an HMA domain; it reads MQKIVFKIPM…KVGPAMFLEV (70 aa). The interval 191-264 is HMA-like domain; the sequence is KIVFKIPMVD…FLEVSQVKED (74 aa). The 289-residue stretch at 282-570 folds into the NB-ARC domain; that stretch reads HEVKTICILG…WIAEGFVSEE (289 aa). LRR repeat units lie at residues 681–706, 708–731, 732–754, 756–777, 778–800, 802–823, 824–848, 945–968, 979–1002, and 1004–1027; these read FKRL…ICEQ, SLRV…MRKL, KHLE…IGEL, HLRI…IREL, QHLH…VGKL, NLKI…IGEL, NHLQ…QISQ, MPNL…INGT, DSRV…EFKF, and AGPA…VFRC.

Belongs to the disease resistance NB-LRR family. Interacts with AVR-Pik through its N-terminal part containing the HMA-like domain. In terms of tissue distribution, constitutively expressed.

Functionally, disease resistance (R) protein that specifically recognizes the AVR-Pik effector avirulence protein from M.oryzae. Resistance proteins guard the plant against pathogens that contain an appropriate avirulence protein via an indirect interaction with this avirulence protein. That triggers a defense system including the hypersensitive response, which restricts the pathogen growth. Contribution of Pikm-2 is required to recognize the effector avirulence protein AVR-Pik. In Oryza sativa subsp. japonica (Rice), this protein is Disease resistance protein Pikm1-TS.